The chain runs to 338 residues: tRNA N6-adenosine threonylcarbamoyltransferase (338 aa).

The Fe cation site is built by His-111 and His-115. Residues 134–138 (LVSGG), Asp-167, Gly-180, and Asn-272 each bind substrate. Residue Asp-300 coordinates Fe cation.

This sequence belongs to the KAE1 / TsaD family. Fe(2+) serves as cofactor.

The protein localises to the cytoplasm. The enzyme catalyses L-threonylcarbamoyladenylate + adenosine(37) in tRNA = N(6)-L-threonylcarbamoyladenosine(37) in tRNA + AMP + H(+). Required for the formation of a threonylcarbamoyl group on adenosine at position 37 (t(6)A37) in tRNAs that read codons beginning with adenine. Is involved in the transfer of the threonylcarbamoyl moiety of threonylcarbamoyl-AMP (TC-AMP) to the N6 group of A37, together with TsaE and TsaB. TsaD likely plays a direct catalytic role in this reaction. The polypeptide is tRNA N6-adenosine threonylcarbamoyltransferase (Shewanella halifaxensis (strain HAW-EB4)).